Consider the following 314-residue polypeptide: Solute carrier family 25 member 44 (314 aa).

Solcar repeat units follow at residues lysine 18–phenylalanine 100, serine 107–glutamine 210, and proline 220–leucine 302. 6 helical membrane passes run phenylalanine 20 to arginine 42, alanine 71 to tyrosine 90, leucine 113 to valine 133, glycine 185 to tryptophan 201, isoleucine 222 to leucine 239, and leucine 278 to tyrosine 296.

It belongs to the mitochondrial carrier (TC 2.A.29) family. In terms of tissue distribution, highly expressed in brown adipose tissues compared with other metabolic organs.

The protein localises to the mitochondrion membrane. It carries out the reaction L-valine(in) = L-valine(out). The enzyme catalyses L-leucine(in) = L-leucine(out). Its function is as follows. Mitochondrial solute transporter which transports branched-chain amino acid (BCAA; valine, leucine and isoleucine) into mitochondria in brown adipose tissue (BAT). BAT is involved in BCAA catabolism and actively utilizes BCAA in the mitochondria for thermogenesis. This chain is Solute carrier family 25 member 44, found in Mus musculus (Mouse).